The chain runs to 325 residues: 6-phosphogluconolactonase 3, chloroplastic (325 aa).

Residues 1–68 constitute a chloroplast transit peptide; it reads MASSSCFLRS…KSSDTRRKVK (68 aa). The interval 51–73 is disordered; that stretch reads SIGTGSTKKSSDTRRKVKSMATT. The short motif at 323–325 is the Microbody targeting signal element; that stretch reads SKL.

This sequence belongs to the glucosamine/galactosamine-6-phosphate isomerase family. 6-phosphogluconolactonase subfamily. As to quaternary structure, interacts with TRXM2. Expressed in roots, leaves and shoots.

The protein resides in the plastid. It is found in the chloroplast. The protein localises to the peroxisome. It catalyses the reaction 6-phospho-D-glucono-1,5-lactone + H2O = 6-phospho-D-gluconate + H(+). It participates in carbohydrate degradation; pentose phosphate pathway; D-ribulose 5-phosphate from D-glucose 6-phosphate (oxidative stage): step 2/3. In terms of biological role, catalyzes the hydrolysis of 6-phosphogluconolactone to 6-phosphogluconate. Involved in the regulation of cellular redox state; enzymatic activity is required for this function. Required for sugar-dependent expression of nitrate assimilation genes in the nucleus of root cells. The chain is 6-phosphogluconolactonase 3, chloroplastic from Arabidopsis thaliana (Mouse-ear cress).